Here is a 233-residue protein sequence, read N- to C-terminus: Orotidine 5'-phosphate decarboxylase (233 aa).

Residues aspartate 13, lysine 35, 62 to 71 (DLKFHDIPNT), threonine 122, arginine 182, glutamine 191, glycine 211, and arginine 212 contribute to the substrate site. The active-site Proton donor is lysine 64.

Belongs to the OMP decarboxylase family. Type 1 subfamily. In terms of assembly, homodimer.

The catalysed reaction is orotidine 5'-phosphate + H(+) = UMP + CO2. The protein operates within pyrimidine metabolism; UMP biosynthesis via de novo pathway; UMP from orotate: step 2/2. Functionally, catalyzes the decarboxylation of orotidine 5'-monophosphate (OMP) to uridine 5'-monophosphate (UMP). This chain is Orotidine 5'-phosphate decarboxylase, found in Pseudomonas entomophila (strain L48).